We begin with the raw amino-acid sequence, 449 residues long: Phosphoglucosamine mutase (449 aa).

The active-site Phosphoserine intermediate is the S100. Residues S100, D241, D243, and D245 each coordinate Mg(2+). S100 is modified (phosphoserine).

This sequence belongs to the phosphohexose mutase family. It depends on Mg(2+) as a cofactor. Activated by phosphorylation.

It carries out the reaction alpha-D-glucosamine 1-phosphate = D-glucosamine 6-phosphate. In terms of biological role, catalyzes the conversion of glucosamine-6-phosphate to glucosamine-1-phosphate. The protein is Phosphoglucosamine mutase of Caldicellulosiruptor bescii (strain ATCC BAA-1888 / DSM 6725 / KCTC 15123 / Z-1320) (Anaerocellum thermophilum).